A 675-amino-acid chain; its full sequence is Anosmin-1 (675 aa).

A signal peptide spans 1–21 (MVRRAPGASLALLLWVTAVSG). Cystine bridges form between cysteine 43–cysteine 77, cysteine 47–cysteine 71, cysteine 80–cysteine 99, cysteine 84–cysteine 95, and cysteine 110–cysteine 114. An N-linked (GlcNAc...) asparagine glycan is attached at asparagine 65. In terms of domain architecture, WAP spans 121–170 (LSVKQGDCPAPEKASGFAAACVESCEADSECSGVKKCCSNGCGHTCQVPK). Fibronectin type-III domains lie at 180–281 (PRKE…SKDP), 286–392 (APSN…TAQD), 418–515 (RRKP…FFVT), and 545–652 (KPEN…DLPP). 2 N-linked (GlcNAc...) asparagine glycosylation sites follow: asparagine 203 and asparagine 294. The segment covering 388–402 (STAQDNRNNNEQTSA) has biased composition (polar residues). Residues 388 to 413 (STAQDNRNNNEQTSAGKPPKGLVDPY) form a disordered region. 3 N-linked (GlcNAc...) asparagine glycosylation sites follow: asparagine 465, asparagine 548, and asparagine 559. The interval 654 to 675 (LPHRPHLKQHHPHHYKPPPEKY) is disordered. A compositionally biased stretch (basic residues) spans 656–669 (HRPHLKQHHPHHYK).

As to expression, mainly expressed in neurons of the central nervous system during the second half of embryonic life. Expressed in mitral neurons of the olfactory bulbs, striatal neurons, Purkinje cells of the cerebellum, retinal neurons and neurons of the brainstem and spinal cord.

It localises to the cell surface. Its function is as follows. May be an adhesion-like molecule with anti-protease activity. The protein is Anosmin-1 of Gallus gallus (Chicken).